A 582-amino-acid chain; its full sequence is Type I secretion system ATP-binding protein PrsD (582 aa).

Transmembrane regions (helical) follow at residues 22–42 (FIGVGVASALVNLLYLTGSFF), 59–79 (LIALSLLALLLYAFQGAFELI), and 148–168 (IAICFLFHPVIGLIAIIGGLI). Positions 22-301 (FIGVGVASAL…AIGNWRGLVA (280 aa)) constitute an ABC transmembrane type-1 domain. The 237-residue stretch at 332–568 (LTVEGLASGP…VLRPQQVERQ (237 aa)) folds into the ABC transporter domain. 366–373 (GPSASGKS) is an ATP binding site.

Belongs to the ABC transporter superfamily. In terms of assembly, part of a type I secretion system composed of PrsD and PrsE.

It is found in the cell inner membrane. Functionally, mediates secretion of glycanase ExsH. The polypeptide is Type I secretion system ATP-binding protein PrsD (prsD) (Rhizobium meliloti (strain 1021) (Ensifer meliloti)).